Consider the following 155-residue polypeptide: 3-hydroxyacyl-[acyl-carrier-protein] dehydratase FabZ (155 aa).

The active site involves histidine 58.

The protein belongs to the thioester dehydratase family. FabZ subfamily.

The protein resides in the cytoplasm. The enzyme catalyses a (3R)-hydroxyacyl-[ACP] = a (2E)-enoyl-[ACP] + H2O. Involved in unsaturated fatty acids biosynthesis. Catalyzes the dehydration of short chain beta-hydroxyacyl-ACPs and long chain saturated and unsaturated beta-hydroxyacyl-ACPs. The sequence is that of 3-hydroxyacyl-[acyl-carrier-protein] dehydratase FabZ from Rhizobium leguminosarum bv. trifolii (strain WSM2304).